A 340-amino-acid chain; its full sequence is ATPase BagA (340 aa).

Residues Gly31, Gly33, Lys34, Ser35, Thr36, Asn240, Pro316, and Val318 each coordinate ATP.

It belongs to the arsA ATPase family. BagA/BagB subfamily. In terms of assembly, forms a heterodimer composed of BagA and BagB. Interacts with Rv1509. Also interacts with a large number of proteins, including proteins required for mycolic acid biosynthesis.

Its activity is regulated as follows. The ATPase activity of the BagAB complex is not stimulated by antimonite, an arsenite substitute, suggesting that BagAB is not a transporter for this family of elements. Functionally, component of the heterodimeric BagAB ATPase complex, whose two subunits are actively involved in ATP hydrolysis. The ATPase activity is required to mediate resistance against nitric oxide (NO) and elevated levels of glycerol. The protein is ATPase BagA of Mycobacterium tuberculosis (strain ATCC 25618 / H37Rv).